Here is a 153-residue protein sequence, read N- to C-terminus: MAPKAEKKPAAKKPAEEEPAAEKAEKAPAGKKPKAEKRLPAGKAEKGSGEGKKAGRKKAKKSVETYKIYIFKVLKQVHPDIGISSKAMSIMNSFINDIFEKLAGESAKLARYNKKPTITSREIQTSVRLVLPGELAKHAVSEGTKAVTKFTSA.

Basic and acidic residues-rich tracts occupy residues 1–28 (MAPKAEKKPAAKKPAEEEPAAEKAEKAP) and 36–53 (EKRLPAGKAEKGSGEGKK). The tract at residues 1–61 (MAPKAEKKPA…KKAGRKKAKK (61 aa)) is disordered. N6-acetyllysine occurs at positions 7 and 37. K149 is covalently cross-linked (Glycyl lysine isopeptide (Lys-Gly) (interchain with G-Cter in ubiquitin)).

The protein belongs to the histone H2B family. As to quaternary structure, the nucleosome is a histone octamer containing two molecules each of H2A, H2B, H3 and H4 assembled in one H3-H4 heterotetramer and two H2A-H2B heterodimers. The octamer wraps approximately 147 bp of DNA. Can be acetylated to form H2BK6ac and H2BK33ac. Post-translationally, monoubiquitinated by BRE1 to form H2BK143ub1 and deubiquitinated by UBP26. Required for heterochromatic histone H3 di- and trimethylation at H3K4me. May give a specific tag for epigenetic transcriptional activation.

It is found in the nucleus. It localises to the chromosome. Functionally, core component of nucleosome. Nucleosomes wrap and compact DNA into chromatin, limiting DNA accessibility to the cellular machineries which require DNA as a template. Histones thereby play a central role in transcription regulation, DNA repair, DNA replication and chromosomal stability. DNA accessibility is regulated via a complex set of post-translational modifications of histones, also called histone code, and nucleosome remodeling. This chain is Histone H2B.4 (H2B.4), found in Oryza sativa subsp. indica (Rice).